A 356-amino-acid chain; its full sequence is MASIAILGGGAWGTALAASLTVNGHTVMLWARRRQTCDAINARNENVQYLPGITLPAALCASPDMAYVCAGADLIVLAVPSCYLAEVAALMNTTPRFQRLRTAAVGQEYPLIGILTKGFIPDQEGMPHLITDALGALLPSGAHGQLVYISGPSHAQEVAQGKVTGLIAASQNPMAAIRVRELLRSKRVQVYSSLDVVGVQVCAAVKNVIAIAFGLLDAMAEHSEAFGDNTESMLLAAGLNEIQTIGKQLGSTHPETFTSLAGIGDLDVTCRSAYGRNRRFGRDIVHKGILDSFSGIQDLVSRLPEVGYLAEGVVACMHVQRLAERDRLKVPICAGLYAILNREKGADTFMQEILGW.

The NADPH site is built by W12, R32, R33, and K117. Residues K117, G151, and S153 each coordinate sn-glycerol 3-phosphate. A155 contacts NADPH. 4 residues coordinate sn-glycerol 3-phosphate: K206, D265, R276, and N277. K206 acts as the Proton acceptor in catalysis. R276 lines the NADPH pocket. L309 and E311 together coordinate NADPH.

This sequence belongs to the NAD-dependent glycerol-3-phosphate dehydrogenase family.

The protein localises to the cytoplasm. The enzyme catalyses sn-glycerol 3-phosphate + NAD(+) = dihydroxyacetone phosphate + NADH + H(+). It catalyses the reaction sn-glycerol 3-phosphate + NADP(+) = dihydroxyacetone phosphate + NADPH + H(+). Its pathway is membrane lipid metabolism; glycerophospholipid metabolism. In terms of biological role, catalyzes the reduction of the glycolytic intermediate dihydroxyacetone phosphate (DHAP) to sn-glycerol 3-phosphate (G3P), the key precursor for phospholipid synthesis. The protein is Glycerol-3-phosphate dehydrogenase [NAD(P)+] of Treponema pallidum (strain Nichols).